Reading from the N-terminus, the 494-residue chain is Protein nucleotidyltransferase YdiU (494 aa).

8 residues coordinate ATP: G101, G103, R104, K123, D135, G136, R186, and R193. The active-site Proton acceptor is the D262. Residues N263 and D272 each coordinate Mg(2+). D272 is an ATP binding site.

The protein belongs to the SELO family. It depends on Mg(2+) as a cofactor. Mn(2+) is required as a cofactor.

The enzyme catalyses L-seryl-[protein] + ATP = 3-O-(5'-adenylyl)-L-seryl-[protein] + diphosphate. The catalysed reaction is L-threonyl-[protein] + ATP = 3-O-(5'-adenylyl)-L-threonyl-[protein] + diphosphate. It catalyses the reaction L-tyrosyl-[protein] + ATP = O-(5'-adenylyl)-L-tyrosyl-[protein] + diphosphate. It carries out the reaction L-histidyl-[protein] + UTP = N(tele)-(5'-uridylyl)-L-histidyl-[protein] + diphosphate. The enzyme catalyses L-seryl-[protein] + UTP = O-(5'-uridylyl)-L-seryl-[protein] + diphosphate. The catalysed reaction is L-tyrosyl-[protein] + UTP = O-(5'-uridylyl)-L-tyrosyl-[protein] + diphosphate. In terms of biological role, nucleotidyltransferase involved in the post-translational modification of proteins. It can catalyze the addition of adenosine monophosphate (AMP) or uridine monophosphate (UMP) to a protein, resulting in modifications known as AMPylation and UMPylation. The polypeptide is Protein nucleotidyltransferase YdiU (Chromohalobacter salexigens (strain ATCC BAA-138 / DSM 3043 / CIP 106854 / NCIMB 13768 / 1H11)).